Reading from the N-terminus, the 204-residue chain is Dephospho-CoA kinase (204 aa).

In terms of domain architecture, DPCK spans 4–201 (VIGLTGGIAS…EKYLAMCKKN (198 aa)). Residue 12–17 (ASGKTT) coordinates ATP.

This sequence belongs to the CoaE family.

The protein resides in the cytoplasm. It carries out the reaction 3'-dephospho-CoA + ATP = ADP + CoA + H(+). It functions in the pathway cofactor biosynthesis; coenzyme A biosynthesis; CoA from (R)-pantothenate: step 5/5. In terms of biological role, catalyzes the phosphorylation of the 3'-hydroxyl group of dephosphocoenzyme A to form coenzyme A. The protein is Dephospho-CoA kinase of Vibrio parahaemolyticus serotype O3:K6 (strain RIMD 2210633).